Consider the following 550-residue polypeptide: CTP synthase (550 aa).

An amidoligase domain region spans residues 1–267; that stretch reads MKTKFIFITG…DQKIAIMLRL (267 aa). Residue serine 14 participates in CTP binding. UTP is bound at residue serine 14. Residues 15 to 20 and aspartate 72 contribute to the ATP site; that span reads SLGKGL. Mg(2+) contacts are provided by aspartate 72 and glutamate 141. CTP-binding positions include 148-150, 188-193, and lysine 224; these read DIE and KTKPTQ. Residues 188–193 and lysine 224 each bind UTP; that span reads KTKPTQ. The 254-residue stretch at 292 to 545 folds into the Glutamine amidotransferase type-1 domain; the sequence is TIGIVGKYVD…IKAAKKEAMG (254 aa). Glycine 354 provides a ligand contact to L-glutamine. Cysteine 381 functions as the Nucleophile; for glutamine hydrolysis in the catalytic mechanism. Residues 382–385, glutamate 405, and arginine 473 each bind L-glutamine; that span reads LGMQ. Residues histidine 518 and glutamate 520 contribute to the active site.

Belongs to the CTP synthase family. Homotetramer.

The enzyme catalyses UTP + L-glutamine + ATP + H2O = CTP + L-glutamate + ADP + phosphate + 2 H(+). It carries out the reaction L-glutamine + H2O = L-glutamate + NH4(+). It catalyses the reaction UTP + NH4(+) + ATP = CTP + ADP + phosphate + 2 H(+). Its pathway is pyrimidine metabolism; CTP biosynthesis via de novo pathway; CTP from UDP: step 2/2. Allosterically activated by GTP, when glutamine is the substrate; GTP has no effect on the reaction when ammonia is the substrate. The allosteric effector GTP functions by stabilizing the protein conformation that binds the tetrahedral intermediate(s) formed during glutamine hydrolysis. Inhibited by the product CTP, via allosteric rather than competitive inhibition. Catalyzes the ATP-dependent amination of UTP to CTP with either L-glutamine or ammonia as the source of nitrogen. Regulates intracellular CTP levels through interactions with the four ribonucleotide triphosphates. The sequence is that of CTP synthase from Nitratidesulfovibrio vulgaris (strain DSM 19637 / Miyazaki F) (Desulfovibrio vulgaris).